The chain runs to 582 residues: Type I secretion system ATP-binding protein PrsD (582 aa).

The next 3 membrane-spanning stretches (helical) occupy residues 22–42 (FIGV…GSFF), 59–79 (LIAL…FELI), and 148–168 (IAIC…GGLI). Residues 22–301 (FIGVGVASAL…AIGNWRGLVA (280 aa)) form the ABC transmembrane type-1 domain. Residues 332–568 (LTVEGLASGP…VLRPQQVERQ (237 aa)) form the ABC transporter domain. 366–373 (GPSASGKS) provides a ligand contact to ATP.

The protein belongs to the ABC transporter superfamily. Part of a type I secretion system composed of PrsD and PrsE.

It is found in the cell inner membrane. Mediates secretion of glycanase ExsH. In Rhizobium meliloti (strain 1021) (Ensifer meliloti), this protein is Type I secretion system ATP-binding protein PrsD (prsD).